The chain runs to 425 residues: Pectate lyase L (425 aa).

The signal sequence occupies residues 1-25; sequence MKYLNCFISTGLAAFFLVNSTSVLA. The cysteines at positions 28 and 114 are disulfide-linked. The Ca(2+) site is built by Asp209, Asp233, Asp234, and Asp237. Residue Lys273 is the Proton acceptor of the active site. Residues Asn402, Ser413, Ala416, Asp418, and Glu423 each coordinate Ca(2+).

It belongs to the polysaccharide lyase 9 family. It depends on Ca(2+) as a cofactor.

It localises to the secreted. The catalysed reaction is Eliminative cleavage of (1-&gt;4)-alpha-D-galacturonan to give oligosaccharides with 4-deoxy-alpha-D-galact-4-enuronosyl groups at their non-reducing ends.. It functions in the pathway glycan metabolism; pectin degradation; 2-dehydro-3-deoxy-D-gluconate from pectin: step 2/5. In terms of biological role, presents an endo-cleaving activity on polygalacturonate or partially methylated pectin. Is effective in the maceration of plant tissue, and has an important role in soft-rot disease. Is 280-fold less active against polygalacturonate than the major pectate lyase PelB. When assayed on polygalacturonate, PelL releases oligogalacturonates of different sizes; upon prolonged incubation, PelL degrades the primary products to unsaturated tetramer and pentamer in addition to unsaturated dimer and trimer. When assayed on oligogalacturonates (degrees of polymerization of 2 to 8), it preferentially forms unsaturated tetramer, and displays the highest activity on the octamer. The polypeptide is Pectate lyase L (pelL) (Dickeya dadantii (strain 3937) (Erwinia chrysanthemi (strain 3937))).